The primary structure comprises 2159 residues: ATP-binding cassette sub-family A member 7 (2159 aa).

Residues 22–42 (PIQLLVELLWPLFLFFILVAV) traverse the membrane as a helical segment. At 43 to 546 (RHSHPPLEHH…DVFLRVLSRS (504 aa)) the chain is on the extracellular side. Residues cysteine 75 and cysteine 222 are joined by a disulfide bond. The N-linked (GlcNAc...) asparagine glycan is linked to asparagine 309. Helical transmembrane passes span 547 to 567 (LPLFLTLAWIYSVALTVKAVV), 590 to 610 (LGWFLSCLGPFLVSAALLVLV), 623 to 643 (VVIFLFLAAFAVATVAQSFLL), 652 to 672 (LAAACGGLAYFALYLPYVLCV), 678 to 698 (LHLGGLLAASLLSPVAFGFGC), and 732 to 752 (AFLLLDAVIYGLALWYLEAVC). The ABC transporter 1 domain maps to 804–1035 (VSIRGLKKHF…LGCGYYLTLV (232 aa)). 838-845 (GHNGAGKT) serves as a coordination point for ATP. A helical membrane pass occupies residues 846–866 (TTLSILSGLFPPSSGSASILG). Disordered regions lie at residues 1042-1088 (VTHD…GAVP) and 1172-1192 (GGDSRPQLHLRTCTPQPPTGP). Basic and acidic residues predominate over residues 1044–1061 (HDAKGDSEDPRREKKSDG). Residues 1062 to 1081 (NGRTSDTAFTRGTSDKSNQA) are compositionally biased toward polar residues. A helical transmembrane segment spans residues 1246 to 1266 (VVLPALFVGLALFFSLIVPPF). At 1267–1551 (GQYPPLQLSP…TLIASSVDVL (285 aa)) the chain is on the extracellular side. An intrachain disulfide couples cysteine 1359 to cysteine 1373. The next 5 membrane-spanning stretches (helical) occupy residues 1552–1572 (VSICVVFAMSFVPASFTLVLI), 1598–1618 (FLWDMCNYLVAVCIVVFIFLA), 1635–1655 (LLLLLYGWSITPLMYPASFFF), 1663–1683 (VVLTCINLFIGINSSMATFVL), and 1743–1763 (IIGKNLLAMMAQGPLFLLITL). The region spanning 1807 to 2039 (LVLRDLTKVY…FGAGHTLTLR (233 aa)) is the ABC transporter 2 domain. 1841–1848 (GVNGAGKT) contributes to the ATP binding site. The disordered stretch occupies residues 2118–2159 (QGEEEESSRQEAEEEEVSKPGRQHPKRVSRFLEDPSSVETMI). Positions 2119–2133 (GEEEESSRQEAEEEE) are enriched in acidic residues.

The protein belongs to the ABC transporter superfamily. ABCA family. N-glycosylated. Widely expressed with higher expression in brain, lung, adrenal gland, spleen and hematopoietic tissues (at protein level). In the brain, expressed in cortex, cerebellum, hippocampus, olfactory bulb, neurons, astrocytes and microglia (at protein level). Also expressed in adipocytes and macrophages (at protein level). Expressed in thymocytes (at protein level). Highly expressed in spleen and hematopoietic tissues. Expressed in brain, lung, macrophages, microglia, oligodendrocytes and neurons.

It localises to the cell membrane. It is found in the golgi apparatus membrane. Its subcellular location is the early endosome membrane. The protein resides in the cytoplasm. The protein localises to the cell projection. It localises to the ruffle membrane. It is found in the phagocytic cup. Its function is as follows. Probable ATP-binding cassette (ABC) transporter that plays a role in lipid homeostasis and macrophage-mediated phagocytosis. Binds APOA1 and may function in apolipoprotein-mediated phospholipid efflux from cells. May also mediate cholesterol efflux. May regulate cellular ceramide homeostasis during keratinocyte differentiation. Involved in lipid raft organization and CD1D localization on thymocytes and antigen-presenting cells, which plays an important role in natural killer T-cell development and activation. Plays a role in phagocytosis of apoptotic cells by macrophages. Macrophage phagocytosis is stimulated by APOA1 or APOA2, probably by stabilization of ABCA7. Also involved in phagocytic clearance of amyloid-beta by microglia cells and macrophages. Further limits amyloid-beta production by playing a role in the regulation of amyloid-beta A4 precursor protein (APP) endocytosis and/or processing. The sequence is that of ATP-binding cassette sub-family A member 7 (Abca7) from Mus musculus (Mouse).